A 138-amino-acid chain; its full sequence is ATP synthase epsilon chain 2 (138 aa).

The protein belongs to the ATPase epsilon chain family. F-type ATPases have 2 components, CF(1) - the catalytic core - and CF(0) - the membrane proton channel. CF(1) has five subunits: alpha(3), beta(3), gamma(1), delta(1), epsilon(1). CF(0) has three main subunits: a, b and c.

It localises to the cell inner membrane. Produces ATP from ADP in the presence of a proton gradient across the membrane. The polypeptide is ATP synthase epsilon chain 2 (Syntrophotalea carbinolica (strain DSM 2380 / NBRC 103641 / GraBd1) (Pelobacter carbinolicus)).